The sequence spans 336 residues: tRNA-dihydrouridine(20/20a) synthase (336 aa).

FMN contacts are provided by residues 24–26 (PMM) and Q77. C107 functions as the Proton donor in the catalytic mechanism. FMN is bound by residues K146, H178, 218–220 (NGG), and 240–241 (GR).

It belongs to the Dus family. DusA subfamily. The cofactor is FMN.

The catalysed reaction is 5,6-dihydrouridine(20) in tRNA + NADP(+) = uridine(20) in tRNA + NADPH + H(+). It carries out the reaction 5,6-dihydrouridine(20) in tRNA + NAD(+) = uridine(20) in tRNA + NADH + H(+). It catalyses the reaction 5,6-dihydrouridine(20a) in tRNA + NADP(+) = uridine(20a) in tRNA + NADPH + H(+). The enzyme catalyses 5,6-dihydrouridine(20a) in tRNA + NAD(+) = uridine(20a) in tRNA + NADH + H(+). Its function is as follows. Catalyzes the synthesis of 5,6-dihydrouridine (D), a modified base found in the D-loop of most tRNAs, via the reduction of the C5-C6 double bond in target uridines. Specifically modifies U20 and U20a in tRNAs. In Pseudomonas syringae pv. tomato (strain ATCC BAA-871 / DC3000), this protein is tRNA-dihydrouridine(20/20a) synthase.